A 389-amino-acid chain; its full sequence is MLLCDSLSFFQQLAWHVQLLACLQWLGRSQVLICLPLGSSFSVRDLAQLCGVSETTLSRVVRLTATAGFLQEPQPGQIMHTPLSGAFGGQPSLRDATLFLSNRITPSALQMASTLHLGRTESAAESAYNLAFATSRTFRDACRVTPKLHRQWIAYLRNTGDSDDSITEVLTRLDWAHLGRSCIVESGARSTTRARVLSKLYPALRFVVQLSGPDQDAHDTRASLTPVPSIPGIIQLDENYPHISVQTRNLGLAQPVLDAAVYILHLPSLSVANSPSRSIVVKELQAHMDVLSSNPSAVLIATARVLPPPGSVHREVEAMCRVRDFTLMQLTNEHEPEVADFDDLVNAVEAGGAGRLVVADKLRARNNLLVAFVLKYQEVSAPGALPSSF.

Residues 13-83 (LAWHVQLLAC…QPGQIMHTPL (71 aa)) form the HTH iclR-type domain. The H-T-H motif DNA-binding region spans 43–62 (VRDLAQLCGVSETTLSRVVR).

It is found in the nucleus. Functionally, transcriptional coactivator; part of the gene cluster that mediates the biosynthesis of geodin, an intermediate in the biosynthesis of other natural products. With gedR, coregulates the production of geodin. The chain is Geodin cluster transcriptional coactivator gedD (gedD) from Aspergillus terreus (strain NIH 2624 / FGSC A1156).